We begin with the raw amino-acid sequence, 460 residues long: Argininosuccinate lyase (460 aa).

It belongs to the lyase 1 family. Argininosuccinate lyase subfamily.

It localises to the cytoplasm. It carries out the reaction 2-(N(omega)-L-arginino)succinate = fumarate + L-arginine. Its pathway is amino-acid biosynthesis; L-arginine biosynthesis; L-arginine from L-ornithine and carbamoyl phosphate: step 3/3. The protein is Argininosuccinate lyase of Desulforamulus reducens (strain ATCC BAA-1160 / DSM 100696 / MI-1) (Desulfotomaculum reducens).